The chain runs to 253 residues: Probable transcriptional regulatory protein syc0529_d (253 aa).

The protein belongs to the TACO1 family.

The protein localises to the cytoplasm. This is Probable transcriptional regulatory protein syc0529_d from Synechococcus sp. (strain ATCC 27144 / PCC 6301 / SAUG 1402/1) (Anacystis nidulans).